A 201-amino-acid polypeptide reads, in one-letter code: Large ribosomal subunit protein uL4 (201 aa).

Residues 44 to 68 (KAQKTRSEVAGTTKKSKKQKGGGAR) form a disordered region.

This sequence belongs to the universal ribosomal protein uL4 family. Part of the 50S ribosomal subunit.

Functionally, one of the primary rRNA binding proteins, this protein initially binds near the 5'-end of the 23S rRNA. It is important during the early stages of 50S assembly. It makes multiple contacts with different domains of the 23S rRNA in the assembled 50S subunit and ribosome. Forms part of the polypeptide exit tunnel. The protein is Large ribosomal subunit protein uL4 of Xanthomonas campestris pv. campestris (strain 8004).